The following is a 139-amino-acid chain: Diuretic hormone 41 (139 aa).

Residues 1–20 form the signal peptide; sequence MMWWALWCAVVVAAGSGVAA. Positions 21 to 79 are excised as a propeptide; that stretch reads APAPDSLSPLDMVQMDSSAPDDETLYAMSPMAARYSAGAPWLYLLADMPRDSQTGSGRV. I122 is modified (isoleucine amide).

This sequence belongs to the sauvagine/corticotropin-releasing factor/urotensin I family. In terms of tissue distribution, expressed in corpora cardiaca (CC), corpora allata (CA), antennal lobe (AL) and gnathal ganglion (GNG) (at protein level). Expression in CC and CA detected in all animals, in GNG in most animals, expression in AL detected in few animals (at protein level).

The protein resides in the secreted. In terms of biological role, regulation of fluid secretion. This Agrotis ipsilon (Black cutworm moth) protein is Diuretic hormone 41.